A 211-amino-acid polypeptide reads, in one-letter code: Large ribosomal subunit protein eL13 (211 aa).

The residue at position 16 (K16) is an N6-acetyllysine. 3 positions are modified to phosphoserine: S52, S77, and S106. Glycyl lysine isopeptide (Lys-Gly) (interchain with G-Cter in SUMO2) cross-links involve residues K123 and K145. K174 is covalently cross-linked (Glycyl lysine isopeptide (Lys-Gly) (interchain with G-Cter in SUMO1); alternate). Residues K174 and K177 each participate in a glycyl lysine isopeptide (Lys-Gly) (interchain with G-Cter in SUMO2); alternate cross-link. K177 carries the N6-acetyllysine; alternate modification.

Belongs to the eukaryotic ribosomal protein eL13 family. In terms of assembly, component of the 60S large ribosomal subunit (LSU). In terms of tissue distribution, higher levels of expression in benign breast lesions than in carcinomas.

It is found in the cytoplasm. Component of the ribosome, a large ribonucleoprotein complex responsible for the synthesis of proteins in the cell. The small ribosomal subunit (SSU) binds messenger RNAs (mRNAs) and translates the encoded message by selecting cognate aminoacyl-transfer RNA (tRNA) molecules. The large subunit (LSU) contains the ribosomal catalytic site termed the peptidyl transferase center (PTC), which catalyzes the formation of peptide bonds, thereby polymerizing the amino acids delivered by tRNAs into a polypeptide chain. The nascent polypeptides leave the ribosome through a tunnel in the LSU and interact with protein factors that function in enzymatic processing, targeting, and the membrane insertion of nascent chains at the exit of the ribosomal tunnel. As part of the LSU, it is probably required for its formation and the maturation of rRNAs. Plays a role in bone development. The sequence is that of Large ribosomal subunit protein eL13 (RPL13) from Homo sapiens (Human).